A 978-amino-acid polypeptide reads, in one-letter code: Peroxisomal ATPase PEX6 (978 aa).

At Arg119 the chain carries Omega-N-methylarginine. ATP contacts are provided by residues 470-477 and 742-749; these read GPPGSGKT and GPPGTGKT.

It belongs to the AAA ATPase family. In terms of assembly, interacts with PEX1; forming the PEX1-PEX6 AAA ATPase complex, which is composed of a heterohexamer formed by a trimer of PEX1-PEX6 dimers. Interacts with PEX26; interaction is direct and promotes recruitment to peroxisomal membranes. Interacts with ZFAND6.

It localises to the cytoplasm. The protein resides in the cytosol. The protein localises to the peroxisome membrane. It is found in the cell projection. Its subcellular location is the cilium. It localises to the photoreceptor outer segment. The catalysed reaction is ATP + H2O = ADP + phosphate + H(+). Its function is as follows. Component of the PEX1-PEX6 AAA ATPase complex, a protein dislocase complex that mediates the ATP-dependent extraction of the PEX5 receptor from peroxisomal membranes, an essential step for PEX5 recycling. Specifically recognizes PEX5 monoubiquitinated at 'Cys-11', and pulls it out of the peroxisome lumen through the PEX2-PEX10-PEX12 retrotranslocation channel. Extraction by the PEX1-PEX6 AAA ATPase complex is accompanied by unfolding of the TPR repeats and release of bound cargo from PEX5. This is Peroxisomal ATPase PEX6 from Rattus norvegicus (Rat).